The sequence spans 415 residues: Serine hydroxymethyltransferase (415 aa).

(6S)-5,6,7,8-tetrahydrofolate-binding positions include Leu117 and 121-123 (GHL). An N6-(pyridoxal phosphate)lysine modification is found at Lys226. Residues Glu241 and 349–351 (SPF) each bind (6S)-5,6,7,8-tetrahydrofolate.

It belongs to the SHMT family. Homodimer. Pyridoxal 5'-phosphate is required as a cofactor.

The protein localises to the cytoplasm. The enzyme catalyses (6R)-5,10-methylene-5,6,7,8-tetrahydrofolate + glycine + H2O = (6S)-5,6,7,8-tetrahydrofolate + L-serine. It functions in the pathway one-carbon metabolism; tetrahydrofolate interconversion. The protein operates within amino-acid biosynthesis; glycine biosynthesis; glycine from L-serine: step 1/1. Functionally, catalyzes the reversible interconversion of serine and glycine with tetrahydrofolate (THF) serving as the one-carbon carrier. This reaction serves as the major source of one-carbon groups required for the biosynthesis of purines, thymidylate, methionine, and other important biomolecules. Also exhibits THF-independent aldolase activity toward beta-hydroxyamino acids, producing glycine and aldehydes, via a retro-aldol mechanism. This chain is Serine hydroxymethyltransferase, found in Geobacter sulfurreducens (strain ATCC 51573 / DSM 12127 / PCA).